A 103-amino-acid polypeptide reads, in one-letter code: Small ribosomal subunit protein uS10 (103 aa).

It belongs to the universal ribosomal protein uS10 family. Part of the 30S ribosomal subunit.

In terms of biological role, involved in the binding of tRNA to the ribosomes. The polypeptide is Small ribosomal subunit protein uS10 (Shewanella frigidimarina (strain NCIMB 400)).